Here is a 191-residue protein sequence, read N- to C-terminus: Pyridoxal 5'-phosphate synthase subunit PdxT (191 aa).

G48–S50 contributes to the L-glutamine binding site. C81 acts as the Nucleophile in catalysis. L-glutamine-binding positions include R109 and I136–R137. Catalysis depends on charge relay system residues H172 and E174.

It belongs to the glutaminase PdxT/SNO family. As to quaternary structure, in the presence of PdxS, forms a dodecamer of heterodimers. Only shows activity in the heterodimer.

The enzyme catalyses aldehydo-D-ribose 5-phosphate + D-glyceraldehyde 3-phosphate + L-glutamine = pyridoxal 5'-phosphate + L-glutamate + phosphate + 3 H2O + H(+). The catalysed reaction is L-glutamine + H2O = L-glutamate + NH4(+). It participates in cofactor biosynthesis; pyridoxal 5'-phosphate biosynthesis. In terms of biological role, catalyzes the hydrolysis of glutamine to glutamate and ammonia as part of the biosynthesis of pyridoxal 5'-phosphate. The resulting ammonia molecule is channeled to the active site of PdxS. The chain is Pyridoxal 5'-phosphate synthase subunit PdxT from Thermus thermophilus (strain ATCC BAA-163 / DSM 7039 / HB27).